The sequence spans 177 residues: MKTRIHVVQGDITKLAVDVIVNVTNPSLMGGGGVDGAIHRAAGPALLDACLKVRQQQGDCPTGHAVITLAGDLPAKAVVHTVGPVWRGGEQNEDQLLQDAYLNSLRLVAANSYTSVAFPAISTGVYGYPRAAAAEIAVKTVSEFITRHALPEQVYFVCYDEENAHLYERLLTQQGDE.

The 175-residue stretch at 1–175 folds into the Macro domain; the sequence is MKTRIHVVQG…LYERLLTQQG (175 aa). Substrate-binding positions include 11–12, asparagine 25, 33–35, and 122–126; these read DI, GVD, and STGVY. Aspartate 35 functions as the Proton acceptor in the catalytic mechanism.

It belongs to the MacroD-type family. YmdB subfamily. Homodimer. Interacts with RNase III.

It catalyses the reaction 3''-O-acetyl-ADP-D-ribose + H2O = ADP-D-ribose + acetate + H(+). The enzyme catalyses 2''-O-acetyl-ADP-D-ribose + H2O = ADP-D-ribose + acetate + H(+). In terms of biological role, deacetylates O-acetyl-ADP ribose to yield ADP-ribose and free acetate. Down-regulates ribonuclease 3 (RNase III) activity. Acts by interacting directly with the region of the ribonuclease that is required for dimerization/activation. The sequence is that of O-acetyl-ADP-ribose deacetylase from Shigella dysenteriae serotype 1 (strain Sd197).